Consider the following 143-residue polypeptide: Envelope protein A28 homolog (143 aa).

The chain crosses the membrane as a helical; Signal-anchor for type II membrane protein span at residues 1 to 21; that stretch reads MNTVQILVVILITTALSFLVF. Residues 22 to 143 are Virion surface-facing; it reads QLWYYAENYE…LLRLLMANTS (122 aa).

Belongs to the poxviridae A28 protein family. Post-translationally, contains two intramolecular disulfide bonds. They are created by the viral disulfide bond formation pathway, a poxvirus-specific pathway that operates on the cytoplasmic side of the MV membranes.

Its subcellular location is the virion membrane. Functionally, envelope protein required for virus entry into host cell and for cell-cell fusion (syncytium formation). The chain is Envelope protein A28 homolog from Amsacta (AmEPV).